Consider the following 537-residue polypeptide: Glutamyl-tRNA(Gln) amidotransferase subunit B, chloroplastic/mitochondrial (537 aa).

Belongs to the GatB/GatE family. GatB subfamily. Subunit of the heterotrimeric GatCAB amidotransferase (AdT) complex, composed of A, B and C subunits.

The protein localises to the mitochondrion. The protein resides in the plastid. Its subcellular location is the chloroplast. The catalysed reaction is L-glutamyl-tRNA(Gln) + L-glutamine + ATP + H2O = L-glutaminyl-tRNA(Gln) + L-glutamate + ADP + phosphate + H(+). Allows the formation of correctly charged Gln-tRNA(Gln) through the transamidation of misacylated Glu-tRNA(Gln) in chloroplasts and mitochondria. The reaction takes place in the presence of glutamine and ATP through an activated gamma-phospho-Glu-tRNA(Gln). This Ostreococcus tauri protein is Glutamyl-tRNA(Gln) amidotransferase subunit B, chloroplastic/mitochondrial.